Reading from the N-terminus, the 354-residue chain is DNA integrity scanning protein DisA (354 aa).

Residues 6–144 enclose the DAC domain; that stretch reads GIGIKNVLKI…GDIKYVLRES (139 aa). ATP-binding positions include glycine 73, leucine 91, and 104-108; that span reads TRHRT.

This sequence belongs to the DisA family. As to quaternary structure, homooctamer. The cofactor is Mg(2+).

It carries out the reaction 2 ATP = 3',3'-c-di-AMP + 2 diphosphate. In terms of biological role, participates in a DNA-damage check-point that is active prior to asymmetric division when DNA is damaged. DisA forms globular foci that rapidly scan along the chromosomes during sporulation, searching for lesions. When a lesion is present, DisA pauses at the lesion site. This triggers a cellular response that culminates in a temporary block in sporulation initiation. Also has diadenylate cyclase activity, catalyzing the condensation of 2 ATP molecules into cyclic di-AMP (c-di-AMP). c-di-AMP acts as a signaling molecule that couples DNA integrity with progression of sporulation. The rise in c-di-AMP level generated by DisA while scanning the chromosome, operates as a positive signal that advances sporulation; upon encountering a lesion, the DisA focus arrests at the damaged site and halts c-di-AMP synthesis. This chain is DNA integrity scanning protein DisA, found in Clostridium beijerinckii (strain ATCC 51743 / NCIMB 8052) (Clostridium acetobutylicum).